The chain runs to 414 residues: Multifunctional CCA protein (414 aa).

The ATP site is built by glycine 8 and arginine 11. Residues glycine 8 and arginine 11 each contribute to the CTP site. Positions 21 and 23 each coordinate Mg(2+). Positions 91, 137, and 140 each coordinate ATP. Positions 91, 137, and 140 each coordinate CTP. The HD domain occupies 228 to 329; sequence TGIHTMMTVA…LKLFDAIDVW (102 aa).

It belongs to the tRNA nucleotidyltransferase/poly(A) polymerase family. Bacterial CCA-adding enzyme type 1 subfamily. In terms of assembly, monomer. Can also form homodimers and oligomers. Mg(2+) serves as cofactor. It depends on Ni(2+) as a cofactor.

It carries out the reaction a tRNA precursor + 2 CTP + ATP = a tRNA with a 3' CCA end + 3 diphosphate. The enzyme catalyses a tRNA with a 3' CCA end + 2 CTP + ATP = a tRNA with a 3' CCACCA end + 3 diphosphate. Catalyzes the addition and repair of the essential 3'-terminal CCA sequence in tRNAs without using a nucleic acid template. Adds these three nucleotides in the order of C, C, and A to the tRNA nucleotide-73, using CTP and ATP as substrates and producing inorganic pyrophosphate. tRNA 3'-terminal CCA addition is required both for tRNA processing and repair. Also involved in tRNA surveillance by mediating tandem CCA addition to generate a CCACCA at the 3' terminus of unstable tRNAs. While stable tRNAs receive only 3'-terminal CCA, unstable tRNAs are marked with CCACCA and rapidly degraded. This Pectobacterium carotovorum subsp. carotovorum (strain PC1) protein is Multifunctional CCA protein.